The chain runs to 452 residues: Tubulin gamma chain (452 aa).

142 to 148 (AGGTGSG) serves as a coordination point for GTP.

Belongs to the tubulin family.

It localises to the cytoplasm. Its subcellular location is the cytoskeleton. The protein resides in the microtubule organizing center. It is found in the centrosome. Its function is as follows. Tubulin is the major constituent of microtubules. The gamma chain is found at microtubule organizing centers (MTOC) such as the spindle poles or the centrosome, suggesting that it is involved in the minus-end nucleation of microtubule assembly. The polypeptide is Tubulin gamma chain (G-TUB) (Plasmodium falciparum (isolate NF54)).